We begin with the raw amino-acid sequence, 246 residues long: 14-3-3 protein beta/alpha (246 aa).

Met1 bears the N-acetylmethionine mark. The residue at position 2 (Thr2) is an N-acetylthreonine; in 14-3-3 protein beta/alpha, N-terminally processed. Thr2 is modified (phosphothreonine). Lys5 is subject to N6-acetyllysine. Lys51 is modified (N6-acetyllysine; alternate). Lys51 participates in a covalent cross-link: Glycyl lysine isopeptide (Lys-Gly) (interchain with G-Cter in SUMO2); alternate. A Phosphoserine modification is found at Ser60. At Lys70 the chain carries N6-acetyllysine. 2 positions are modified to 3'-nitrotyrosine: Tyr84 and Tyr106. At Lys117 the chain carries N6-acetyllysine. A phosphoserine mark is found at Ser186 and Ser232.

This sequence belongs to the 14-3-3 family. In terms of assembly, homodimer. Interacts with SAMSN1 and PRKCE. Interacts with AKAP13. Interacts with SSH1 and TORC2/CRTC2. Interacts with ABL1; the interaction results in cytoplasmic location of ABL1 and inhibition of cABL-mediated apoptosis. Interacts with ROR2 (dimer); the interaction results in phosphorylation of YWHAB on tyrosine residues. Interacts with GAB2. Interacts with YAP1 (phosphorylated form). Interacts with the phosphorylated (by AKT1) form of SRPK2. Interacts with PKA-phosphorylated AANAT. Interacts with MYO1C. Interacts with SIRT2. Interacts with the 'Thr-369' phosphorylated form of DAPK2. Interacts with PI4KB, TBC1D22A and TBC1D22B. Interacts with the 'Ser-1134' and 'Ser-1161' phosphorylated form of SOS1. Interacts (via phosphorylated form) with YWHAB; this interaction occurs in a protein kinase AKT1-dependent manner. Interacts with SLITRK1. Interacts with SYNPO2 (phosphorylated form); YWHAB competes with ACTN2 for interaction with SYNPO2. Interacts with RIPOR2 (via phosphorylated form); this interaction occurs in a chemokine-dependent manner and does not compete for binding of RIPOR2 with RHOA nor blocks inhibition of RIPOR2-mediated RHOA activity. Interacts with MARK2 and MARK3. Interacts with TESK1; the interaction is dependent on the phosphorylation of TESK1 'Ser-439' and inhibits TESK1 kinase activity. Interacts with MEFV. Interacts with HDAC4. Interacts with ADAM22 (via C-terminus). Isoform alpha differs from isoform beta in being phosphorylated. Phosphorylated on Ser-60 by protein kinase C delta type catalytic subunit in a sphingosine-dependent fashion. In terms of processing, isoform Short contains a N-acetylmethionine at position 1.

It localises to the cytoplasm. The protein localises to the melanosome. Its function is as follows. Adapter protein implicated in the regulation of a large spectrum of both general and specialized signaling pathways. Binds to a large number of partners, usually by recognition of a phosphoserine or phosphothreonine motif. Binding generally results in the modulation of the activity of the binding partner. Negative regulator of osteogenesis. Blocks the nuclear translocation of the phosphorylated form (by AKT1) of SRPK2 and antagonizes its stimulatory effect on cyclin D1 expression resulting in blockage of neuronal apoptosis elicited by SRPK2. Negative regulator of signaling cascades that mediate activation of MAP kinases via AKAP13. The sequence is that of 14-3-3 protein beta/alpha (Ywhab) from Mus musculus (Mouse).